The primary structure comprises 318 residues: Basic leucine zipper (bZIP) transcription factor atfB (318 aa).

Disordered stretches follow at residues 79-100 (LKNT…KKLQ) and 114-164 (FNSS…EKRE). Residues 160–199 (REKREKFLERNRLAASKCRQKKKEHTKLLETRFREVSSKK) form a basic motif region. The 64-residue stretch at 160 to 223 (REKREKFLER…LNLKNEMLRH (64 aa)) folds into the bZIP domain. The leucine-zipper stretch occupies residues 202–216 (LESEIEHLRSEVLNL). The interval 247-304 (TPNRDLVSPMRSPEQMTASTPHGLSFGFDGPMQLPSEMGSPLDQRRDSEQSIMTESSY) is disordered.

It belongs to the bZIP family. ATF subfamily.

It localises to the nucleus. Functionally, transcription factor that acts as a key player in the regulatory circuit that integrates secondary metabolism and cellular response to oxidative stress. Regulates the genes involved in development, stress response, and secondary metabolism through direct binding to their promoters. Particularly involved in the resistance to oxidative stress in asexual conidiospores. Binds aflatoxin gene promoters carrying the cAMP-response element (CRE1) under aflatoxin-inducing conditions. In Aspergillus parasiticus (strain ATCC 56775 / NRRL 5862 / SRRC 143 / SU-1), this protein is Basic leucine zipper (bZIP) transcription factor atfB.